A 379-amino-acid chain; its full sequence is Cytochrome b (379 aa).

Transmembrane regions (helical) follow at residues 33–53 (FGSLLGLCLISQIITGLFLAM), 77–98 (WLIRNLHANGASFFFICLYLHI), 113–133 (WNIGVVLFLLVMMTAFVGYVL), and 178–198 (FFAFHFLFPFVVAGATMIHLL). Histidine 83 and histidine 97 together coordinate heme b. Heme b is bound by residues histidine 182 and histidine 196. Histidine 201 provides a ligand contact to a ubiquinone. The next 4 helical transmembrane spans lie at 226–246 (YKDLLGFIIMLTALTMLALFY), 288–308 (LGGVLALLSSILVLMVVPILH), 320–340 (ASQLLFWILVADMLVLTWIGG), and 347–367 (YIIIGQVASVLYFSLFLVLNP).

This sequence belongs to the cytochrome b family. The cytochrome bc1 complex contains 3 respiratory subunits (MT-CYB, CYC1 and UQCRFS1), 2 core proteins (UQCRC1 and UQCRC2) and probably 6 low-molecular weight proteins. Heme b serves as cofactor.

The protein resides in the mitochondrion inner membrane. In terms of biological role, component of the ubiquinol-cytochrome c reductase complex (complex III or cytochrome b-c1 complex) that is part of the mitochondrial respiratory chain. The b-c1 complex mediates electron transfer from ubiquinol to cytochrome c. Contributes to the generation of a proton gradient across the mitochondrial membrane that is then used for ATP synthesis. In Anguilla interioris (Highlands long-finned eel), this protein is Cytochrome b (mt-cyb).